The primary structure comprises 517 residues: 2-isopropylmalate synthase (517 aa).

The Pyruvate carboxyltransferase domain maps to 7–269 (VIIFDTTLRD…ETGIDTTQIV (263 aa)). Mn(2+) is bound by residues aspartate 16, histidine 204, histidine 206, and asparagine 240. Residues 366–517 (LADKKREIFD…KPKAQGSGTI (152 aa)) are required for the condensation reaction. Not required to bind substrate. Positions 395 to 517 (KFISQKISTE…KPKAQGSGTI (123 aa)) are regulatory domain.

This sequence belongs to the alpha-IPM synthase/homocitrate synthase family. LeuA type 1 subfamily. Homodimer. Remains a homodimer in the presence of L-leucine. Mn(2+) is required as a cofactor.

It is found in the cytoplasm. It carries out the reaction 3-methyl-2-oxobutanoate + acetyl-CoA + H2O = (2S)-2-isopropylmalate + CoA + H(+). It participates in amino-acid biosynthesis; L-leucine biosynthesis; L-leucine from 3-methyl-2-oxobutanoate: step 1/4. Inhibited by 3-bromo substituents and Leu, the pathway end product. Functionally, catalyzes the condensation of the acetyl group of acetyl-CoA with 3-methyl-2-oxobutanoate (2-ketoisovalerate) to form 3-carboxy-3-hydroxy-4-methylpentanoate (2-isopropylmalate). Complements an E.coli deletion. The protein is 2-isopropylmalate synthase of Neisseria meningitidis serogroup B (strain ATCC BAA-335 / MC58).